Consider the following 173-residue polypeptide: Ribulose bisphosphate carboxylase small subunit, chloroplastic 1 (173 aa).

A chloroplast-targeting transit peptide spans 1-52 (MMVSTAAVARVRPAQTNMVGAFNGCRSSVAFPATRKANNDLSTLPSSGGRVS).

This sequence belongs to the RuBisCO small chain family. In terms of assembly, heterohexadecamer of 8 large and 8 small subunits.

The protein resides in the plastid. It localises to the chloroplast. RuBisCO catalyzes two reactions: the carboxylation of D-ribulose 1,5-bisphosphate, the primary event in carbon dioxide fixation, as well as the oxidative fragmentation of the pentose substrate. Both reactions occur simultaneously and in competition at the same active site. Although the small subunit is not catalytic it is essential for maximal activity. In Lemna gibba (Swollen duckweed), this protein is Ribulose bisphosphate carboxylase small subunit, chloroplastic 1.